A 77-amino-acid chain; its full sequence is Small ribosomal subunit protein bS18 (77 aa).

This sequence belongs to the bacterial ribosomal protein bS18 family. As to quaternary structure, part of the 30S ribosomal subunit. Forms a tight heterodimer with protein bS6.

Binds as a heterodimer with protein bS6 to the central domain of the 16S rRNA, where it helps stabilize the platform of the 30S subunit. This is Small ribosomal subunit protein bS18 from Bacillus thuringiensis subsp. konkukian (strain 97-27).